The sequence spans 420 residues: ATP phosphoribosyltransferase regulatory subunit (420 aa).

This sequence belongs to the class-II aminoacyl-tRNA synthetase family. HisZ subfamily. Heteromultimer composed of HisG and HisZ subunits.

It is found in the cytoplasm. Its pathway is amino-acid biosynthesis; L-histidine biosynthesis; L-histidine from 5-phospho-alpha-D-ribose 1-diphosphate: step 1/9. Functionally, required for the first step of histidine biosynthesis. May allow the feedback regulation of ATP phosphoribosyltransferase activity by histidine. This chain is ATP phosphoribosyltransferase regulatory subunit, found in Bacillus cereus (strain ZK / E33L).